Here is a 261-residue protein sequence, read N- to C-terminus: LIM and SH3 domain protein 1 (261 aa).

An N-acetylmethionine modification is found at Met-1. Residues 5-56 (CARCGKIVYPTEKVNCLDKFWHKACFHCETCKMTLNMKNYKGYEKKPYCNAH) enclose the LIM zinc-binding domain. The residue at position 42 (Lys-42) is an N6-acetyllysine. Nebulin repeat units lie at residues 61-95 (SFTMVADTPENLRLKQQSELQSQVRYKEEFEKNKG) and 97-131 (GFSVVADTPELQRIKKTQDQISNIKYHEEFEKSRM). Phosphothreonine is present on Thr-68. Lys-75 is modified (N6-methyllysine). Ser-99 bears the Phosphoserine mark. A Phosphothreonine modification is found at Thr-104. The tract at residues 111 to 186 (KKTQDQISNI…QPVAQSYGGY (76 aa)) is disordered. Lys-112 bears the N6-succinyllysine mark. The residue at position 118 (Ser-118) is a Phosphoserine. A compositionally biased stretch (basic and acidic residues) spans 121-130 (KYHEEFEKSR). Phosphoserine occurs at positions 134 and 146. The span at 167 to 183 (SAPVYQQPQQQPVAQSY) shows a compositional bias: low complexity. Residues 202-261 (GGGKRYRAVYDYSAADEDEVSFQDGDTIVNVQQIDDGWMYGTVERTGDTGMLPANYVEAI) form the SH3 domain.

In terms of assembly, interacts with F-actin. Interacts with ANKRD54. Interacts with KBTBD10.

It is found in the cytoplasm. The protein resides in the cell cortex. It localises to the cytoskeleton. Its function is as follows. Plays an important role in the regulation of dynamic actin-based, cytoskeletal activities. Agonist-dependent changes in LASP1 phosphorylation may also serve to regulate actin-associated ion transport activities, not only in the parietal cell but also in certain other F-actin-rich secretory epithelial cell types. This chain is LIM and SH3 domain protein 1 (LASP1), found in Homo sapiens (Human).